We begin with the raw amino-acid sequence, 127 residues long: Fluoride-specific ion channel FluC (127 aa).

The next 4 membrane-spanning stretches (helical) occupy residues 1 to 21 (MPQG…GACL), 39 to 59 (FGTL…YGVI), 72 to 92 (LIGV…VETL), and 105 to 125 (ANVF…IELM). 2 residues coordinate Na(+): Gly79 and Thr82.

It belongs to the fluoride channel Fluc/FEX (TC 1.A.43) family.

It localises to the cell inner membrane. It carries out the reaction fluoride(in) = fluoride(out). Na(+) is not transported, but it plays an essential structural role and its presence is essential for fluoride channel function. Fluoride-specific ion channel. Important for reducing fluoride concentration in the cell, thus reducing its toxicity. This is Fluoride-specific ion channel FluC from Alteromonas mediterranea (strain DSM 17117 / CIP 110805 / LMG 28347 / Deep ecotype).